The following is a 405-amino-acid chain: Nicotinate phosphoribosyltransferase (405 aa).

His230 bears the Phosphohistidine; by autocatalysis mark.

The protein belongs to the NAPRTase family. Post-translationally, transiently phosphorylated on a His residue during the reaction cycle. Phosphorylation strongly increases the affinity for substrates and increases the rate of nicotinate D-ribonucleotide production. Dephosphorylation regenerates the low-affinity form of the enzyme, leading to product release.

It catalyses the reaction nicotinate + 5-phospho-alpha-D-ribose 1-diphosphate + ATP + H2O = nicotinate beta-D-ribonucleotide + ADP + phosphate + diphosphate. Its pathway is cofactor biosynthesis; NAD(+) biosynthesis; nicotinate D-ribonucleotide from nicotinate: step 1/1. Functionally, catalyzes the synthesis of beta-nicotinate D-ribonucleotide from nicotinate and 5-phospho-D-ribose 1-phosphate at the expense of ATP. This Bordetella bronchiseptica (strain ATCC BAA-588 / NCTC 13252 / RB50) (Alcaligenes bronchisepticus) protein is Nicotinate phosphoribosyltransferase.